We begin with the raw amino-acid sequence, 485 residues long: Glutamyl-tRNA(Gln) amidotransferase subunit A (485 aa).

Residues lysine 78 and serine 153 each act as charge relay system in the active site. Serine 177 functions as the Acyl-ester intermediate in the catalytic mechanism.

It belongs to the amidase family. GatA subfamily. As to quaternary structure, heterotrimer of A, B and C subunits.

The enzyme catalyses L-glutamyl-tRNA(Gln) + L-glutamine + ATP + H2O = L-glutaminyl-tRNA(Gln) + L-glutamate + ADP + phosphate + H(+). Allows the formation of correctly charged Gln-tRNA(Gln) through the transamidation of misacylated Glu-tRNA(Gln) in organisms which lack glutaminyl-tRNA synthetase. The reaction takes place in the presence of glutamine and ATP through an activated gamma-phospho-Glu-tRNA(Gln). This Bacillus cereus (strain ATCC 10987 / NRS 248) protein is Glutamyl-tRNA(Gln) amidotransferase subunit A.